The primary structure comprises 110 residues: Large ribosomal subunit protein uL22 (110 aa).

This sequence belongs to the universal ribosomal protein uL22 family. In terms of assembly, part of the 50S ribosomal subunit.

This protein binds specifically to 23S rRNA; its binding is stimulated by other ribosomal proteins, e.g. L4, L17, and L20. It is important during the early stages of 50S assembly. It makes multiple contacts with different domains of the 23S rRNA in the assembled 50S subunit and ribosome. In terms of biological role, the globular domain of the protein is located near the polypeptide exit tunnel on the outside of the subunit, while an extended beta-hairpin is found that lines the wall of the exit tunnel in the center of the 70S ribosome. The polypeptide is Large ribosomal subunit protein uL22 (Exiguobacterium sp. (strain ATCC BAA-1283 / AT1b)).